Reading from the N-terminus, the 87-residue chain is Cell division topological specificity factor (87 aa).

This sequence belongs to the MinE family.

Its function is as follows. Prevents the cell division inhibition by proteins MinC and MinD at internal division sites while permitting inhibition at polar sites. This ensures cell division at the proper site by restricting the formation of a division septum at the midpoint of the long axis of the cell. This chain is Cell division topological specificity factor, found in Roseiflexus castenholzii (strain DSM 13941 / HLO8).